A 675-amino-acid polypeptide reads, in one-letter code: Electrogenic aspartate/glutamate antiporter SLC25A13, mitochondrial (675 aa).

Ala2 carries the post-translational modification N-acetylalanine. The tract at residues 2–295 (AAAKVALTKR…TLADIERIAP (294 aa)) is regulatory N-terminal domain. The Mitochondrial intermembrane segment spans residues 2-331 (AAAKVALTKR…LLQVAESAYR (330 aa)). EF-hand domains lie at 51-86 (SQPN…SVLC), 87-122 (APDA…TTIH), 125-157 (IPFN…FLLE), and 158-193 (IQLE…IRPH). Residues Asp66, Thr68, Asp70, Leu72, and Glu77 each coordinate Ca(2+). The segment at 296 to 311 (LEEGTLPFNLAEAQRQ) is linker loop domain. Residues 321–612 (VLLQVAESAY…LQRWFYIDFG (292 aa)) form a carrier domain region. 3 Solcar repeats span residues 326–418 (AESA…VRDK), 426–510 (VPLA…VKAS), and 518–606 (VSPG…LQRW). The chain crosses the membrane as a helical span at residues 332–349 (FGLGSVAGAVGATAVYPI). At 350–392 (DLVKTRMQNQRSTGSFVGELMYKNSFDCFKKVLRYEGFFGLYR) the chain is on the mitochondrial matrix side. 2 positions are modified to N6-acetyllysine: Lys353 and Lys372. The helical transmembrane segment at 393-412 (GLLPQLLGVAPEKAIKLTVN) threads the bilayer. Over 413–435 (DFVRDKFMHKDGSVPLAAEILAG) the chain is Mitochondrial intermembrane. A helical membrane pass occupies residues 436–449 (GCAGGSQVIFTNPL). Topologically, residues 450 to 484 (EIVKIRLQVAGEITTGPRVSALSVVRDLGFFGIYK) are mitochondrial matrix. Lys453 bears the N6-methyllysine mark. Lys484 carries the N6-acetyllysine; alternate modification. An N6-succinyllysine; alternate modification is found at Lys484. Residues 485–504 (GAKACFLRDIPFSAIYFPCY) form a helical membrane-spanning segment. The Mitochondrial intermembrane segment spans residues 505–523 (AHVKASFANEDGQVSPGSL). A helical membrane pass occupies residues 524-541 (LLAGAIAGMPAASLVTPA). The Mitochondrial matrix segment spans residues 542–580 (DVIKTRLQVAARAGQTTYSGVIDCFRKILREEGPKALWK). Lys580 carries the post-translational modification N6-succinyllysine. A helical transmembrane segment spans residues 581–600 (GAGARVFRSSPQFGVTLLTY). Topologically, residues 601 to 675 (ELLQRWFYID…STSKAIGGGP (75 aa)) are mitochondrial intermembrane. The interval 613 to 675 (GVKPMGSEPV…STSKAIGGGP (63 aa)) is C-terminal domain. Residue Lys662 is modified to N6-acetyllysine. Ser666 is subject to Phosphoserine.

It belongs to the mitochondrial carrier (TC 2.A.29) family. In terms of assembly, homodimer (via N-terminus). As to expression, high levels in liver and low levels in kidney, pancreas, placenta, heart and brain.

Its subcellular location is the mitochondrion inner membrane. It carries out the reaction L-aspartate(in) + L-glutamate(out) + H(+)(out) = L-aspartate(out) + L-glutamate(in) + H(+)(in). It catalyses the reaction 3-sulfino-L-alanine(out) + L-glutamate(in) + H(+)(in) = 3-sulfino-L-alanine(in) + L-glutamate(out) + H(+)(out). The catalysed reaction is 3-sulfino-L-alanine(out) + L-aspartate(in) = 3-sulfino-L-alanine(in) + L-aspartate(out). Activated by calcium-binding in the mitochondrial intermembrane space. Inhibited by pyridoxal 5'-phosphate, bathophenathroline, mercurials, diethyl pyrocarbonate and N-ethylmaleimide. In terms of biological role, mitochondrial electrogenic aspartate/glutamate antiporter that favors efflux of aspartate and entry of glutamate and proton within the mitochondria as part of the malate-aspartate shuttle. Also mediates the uptake of L-cysteinesulfinate (3-sulfino-L-alanine) by mitochondria in exchange of L-glutamate and proton. Can also exchange L-cysteinesulfinate with aspartate in their anionic form without any proton translocation. Lacks transport activity towards gamma-aminobutyric acid (GABA). This is Electrogenic aspartate/glutamate antiporter SLC25A13, mitochondrial from Homo sapiens (Human).